An 82-amino-acid chain; its full sequence is RNA-binding protein Hfq (82 aa).

The Sm domain occupies Asp-11–Val-71.

Belongs to the Hfq family. Homohexamer.

In terms of biological role, RNA chaperone that binds small regulatory RNA (sRNAs) and mRNAs to facilitate mRNA translational regulation in response to envelope stress, environmental stress and changes in metabolite concentrations. Also binds with high specificity to tRNAs. The sequence is that of RNA-binding protein Hfq from Caulobacter vibrioides (strain ATCC 19089 / CIP 103742 / CB 15) (Caulobacter crescentus).